A 176-amino-acid chain; its full sequence is MTMCSGARLALLVYGILMHSSVYGSPAASGLRFPGIRPENEAYDEDGNPQQDFYDSEPPGVGSPASALRDAYALYYPAEERDVAHGILDKAYRKVLDQLSARRYLQTLMAKGLGGTPGGGADDDSEPLSKRHSDGIFTDSYSRYRKQMAVKKYLAAVLGKRYKQRVKNKGRRIPYL.

A signal peptide spans 1–24 (MTMCSGARLALLVYGILMHSSVYG). The propeptide occupies 25–80 (SPAASGLRFPGIRPENEAYDEDGNPQQDFYDSEPPGVGSPASALRDAYALYYPAEE). Disordered stretches follow at residues 36–62 (IRPENEAYDEDGNPQQDFYDSEPPGVG) and 115–134 (GTPGGGADDDSEPLSKRHSD). Residues 150-158 (VKKYLAAVL) are important for receptor binding. Position 158 is a leucine amide (Leu158). Lys169 is subject to Lysine amide. The propeptide occupies 173–176 (IPYL).

Belongs to the glucagon family.

The protein resides in the secreted. PACAP is a neuropeptide involved in diverse array of physiological processes through activating the PACAP subfamily of class B1 G protein-coupled receptors: VIP receptor 1 (VIPR1), VIP receptor 2 (VIPR2), and PACAP type I receptor (ADCYAP1R1). Exerts neuroprotective and general cytoprotective effects due to anti-apoptotic, anti-inflammatory, and antioxidant actions. Promotes neuron projection development through the RAPGEF2/Rap1/B-Raf/ERK pathway. In chromaffin cells, induces long-lasting increase of intracellular calcium concentrations and neuroendocrine secretion. Involved in the control of glucose homeostasis, induces insulin secretion by pancreatic beta cells. PACAP exists in two bioactive forms from proteolysis of the same precursor protein, PACAP27 and PACAP38, which differ by eleven amino acid residues in the C-terminus. This is Pituitary adenylate cyclase-activating polypeptide (ADCYAP1) from Ovis aries (Sheep).